Reading from the N-terminus, the 457-residue chain is Argininosuccinate lyase (457 aa).

This sequence belongs to the lyase 1 family. Argininosuccinate lyase subfamily.

The protein resides in the cytoplasm. The enzyme catalyses 2-(N(omega)-L-arginino)succinate = fumarate + L-arginine. It functions in the pathway amino-acid biosynthesis; L-arginine biosynthesis; L-arginine from L-ornithine and carbamoyl phosphate: step 3/3. The chain is Argininosuccinate lyase from Pectobacterium atrosepticum (strain SCRI 1043 / ATCC BAA-672) (Erwinia carotovora subsp. atroseptica).